The following is a 163-amino-acid chain: SsrA-binding protein (163 aa).

Positions 135 to 156 (GKKEHDKRDDTKEREWKIEKSR) are enriched in basic and acidic residues. A disordered region spans residues 135–163 (GKKEHDKRDDTKEREWKIEKSRTMKHAAR).

This sequence belongs to the SmpB family.

It localises to the cytoplasm. Its function is as follows. Required for rescue of stalled ribosomes mediated by trans-translation. Binds to transfer-messenger RNA (tmRNA), required for stable association of tmRNA with ribosomes. tmRNA and SmpB together mimic tRNA shape, replacing the anticodon stem-loop with SmpB. tmRNA is encoded by the ssrA gene; the 2 termini fold to resemble tRNA(Ala) and it encodes a 'tag peptide', a short internal open reading frame. During trans-translation Ala-aminoacylated tmRNA acts like a tRNA, entering the A-site of stalled ribosomes, displacing the stalled mRNA. The ribosome then switches to translate the ORF on the tmRNA; the nascent peptide is terminated with the 'tag peptide' encoded by the tmRNA and targeted for degradation. The ribosome is freed to recommence translation, which seems to be the essential function of trans-translation. In Shewanella loihica (strain ATCC BAA-1088 / PV-4), this protein is SsrA-binding protein.